Here is a 107-residue protein sequence, read N- to C-terminus: Small ribosomal subunit protein uS17 (107 aa).

The protein belongs to the universal ribosomal protein uS17 family. In terms of assembly, part of the 30S ribosomal subunit.

Its function is as follows. One of the primary rRNA binding proteins, it binds specifically to the 5'-end of 16S ribosomal RNA. The polypeptide is Small ribosomal subunit protein uS17 (Aquifex aeolicus (strain VF5)).